A 686-amino-acid chain; its full sequence is Amyloid-beta-like protein (686 aa).

An N-terminal signal peptide occupies residues 1–21; the sequence is MTVGKLMIGLLIPILVATVYA. Residues 22 to 621 lie on the Extracellular side of the membrane; sequence EGSPAGSKRH…VERSASSVFQ (600 aa). The GFLD subdomain stretch occupies residues 32–125; that stretch reads EKFIPMVAFS…PYHCIDGEFH (94 aa). The 166-residue stretch at 32–197 folds into the E1 domain; sequence EKFIPMVAFS…TGVEFVCCPN (166 aa). 6 disulfides stabilise this stretch: Cys-42-Cys-65, Cys-76-Cys-119, Cys-101-Cys-108, Cys-135-Cys-195, Cys-146-Cys-182, and Cys-160-Cys-194. An N-linked (GlcNAc...) asparagine glycan is attached at Asn-84. Positions 133 to 197 are cuBD subdomain; it reads HDCQFSHVNS…TGVEFVCCPN (65 aa). Asn-201 is a glycosylation site (N-linked (GlcNAc...) asparagine). The interval 201-245 is disordered; that stretch reads NKTDVQKTKEDEDDDDDEDDAYEDDYSEESDEKDEEEPSSQDPYF. The segment covering 211-239 has biased composition (acidic residues); the sequence is DEDDDDDEDDAYEDDYSEESDEKDEEEPS. One can recognise an E2 domain in the interval 240–440; it reads SQDPYFKIAN…KYVRPIAVTY (201 aa). N-linked (GlcNAc...) asparagine glycosylation is present at Asn-249. Heparin is bound by residues 252–255 and His-382; that span reads NEHD. Asn-417 is a glycosylation site (N-linked (GlcNAc...) asparagine). Disordered stretches follow at residues 479–526 and 550–585; these read PTTT…DMKK and KLVE…NIKE. Positions 500–516 are enriched in acidic residues; it reads SDSEEEADEYYEDEDDE. Residues 517–526 show a composition bias toward basic and acidic residues; it reads QVKKTPDMKK. The segment covering 558–567 has biased composition (acidic residues); that stretch reads TDDEDDDEDS. A helical membrane pass occupies residues 622–642; the sequence is PYVLASAMFITAICIIAFAIT. Over 643–686 the chain is Cytoplasmic; it reads NARRRRAMRGFIEVDVYTPEERHVAGMQVNGYENPTYSFFDSKA. A YENPXY motif motif is present at residues 674 to 679; that stretch reads YENPTY.

Belongs to the APP family. As to quaternary structure, interacts (via cytoplasmic domain) with feh-1 (via PID 2 domain). Extracellular region is proteolytically cleaved. As to expression, expressed in the head, pharynx, spermatheca, uterus, vulva, tail and ventral neurons. Specifically expressed in nerve ring interneurons, the ventral cord, socket and amphids in the head, with strong expression in junctional cells, including the pharyngeal intestinal valve and uterine seam junction, and the excretory cell and weak expression in epidermal epithelial cells, including hyp7 cells, vulval cells, rectal valve cells, pharyngeal arcade cells and the tail hypodermis.

It localises to the membrane. It is found in the early endosome. In terms of biological role, required for normal developmental progression throughout all life stages. Specifically required for the molt stage during all larval transitions and morphogenesis. Acts with heterochronic genes, including members of the let-7 family, to regulate larval stage to adult transition. Acts synergistically with acn-1 in let-7 regulated postembryonic cell division of hypodermal seam cells. Acts in multiple pathways to influence daf-12 and daf-16 activity to in turn regulate physiological and reproductive processes such as body size and egg-laying. May play a role in neurotransmission. The protein is Amyloid-beta-like protein of Caenorhabditis elegans.